We begin with the raw amino-acid sequence, 337 residues long: Glyceraldehyde-3-phosphate dehydrogenase (337 aa).

NAD(+) contacts are provided by residues 12-13, Asp34, and Arg79; that span reads RI. D-glyceraldehyde 3-phosphate-binding positions include 150–152, Thr181, 210–211, and Arg233; these read SCT and TG. Cys151 (nucleophile) is an active-site residue. Asn315 lines the NAD(+) pocket.

It belongs to the glyceraldehyde-3-phosphate dehydrogenase family. Homotetramer.

The protein resides in the cytoplasm. The catalysed reaction is D-glyceraldehyde 3-phosphate + phosphate + NAD(+) = (2R)-3-phospho-glyceroyl phosphate + NADH + H(+). It participates in carbohydrate degradation; glycolysis; pyruvate from D-glyceraldehyde 3-phosphate: step 1/5. The chain is Glyceraldehyde-3-phosphate dehydrogenase (GPD) from Ajellomyces capsulatus (Darling's disease fungus).